Consider the following 103-residue polypeptide: Co-chaperonin GroES (103 aa).

Belongs to the GroES chaperonin family. As to quaternary structure, heptamer of 7 subunits arranged in a ring. Interacts with the chaperonin GroEL.

The protein resides in the cytoplasm. Its function is as follows. Together with the chaperonin GroEL, plays an essential role in assisting protein folding. The GroEL-GroES system forms a nano-cage that allows encapsulation of the non-native substrate proteins and provides a physical environment optimized to promote and accelerate protein folding. GroES binds to the apical surface of the GroEL ring, thereby capping the opening of the GroEL channel. This is Co-chaperonin GroES from Synechococcus sp. (strain CC9605).